Here is a 107-residue protein sequence, read N- to C-terminus: Ferredoxin 1 (107 aa).

2 consecutive 4Fe-4S ferredoxin-type domains span residues 2–30 and 31–60; these read TFVV…YEGP and NFLV…SEDE. Cys-9 and Cys-17 together coordinate [3Fe-4S] cluster. Cys-21, Cys-40, Cys-43, and Cys-46 together coordinate [4Fe-4S] cluster. Cys-50 is a binding site for [3Fe-4S] cluster.

It depends on [4Fe-4S] cluster as a cofactor. Requires [3Fe-4S] cluster as cofactor.

In terms of biological role, ferredoxins are iron-sulfur proteins that transfer electrons in a wide variety of metabolic reactions. This Pseudomonas putida (strain ATCC 47054 / DSM 6125 / CFBP 8728 / NCIMB 11950 / KT2440) protein is Ferredoxin 1 (fdxA).